Reading from the N-terminus, the 48-residue chain is Sperm protamine P1 (48 aa).

It belongs to the protamine P1 family. In terms of assembly, cross-linked by interchain disulfide bonds around the DNA-helix. In terms of tissue distribution, testis.

The protein localises to the nucleus. It localises to the chromosome. Protamines substitute for histones in the chromatin of sperm during the haploid phase of spermatogenesis. They compact sperm DNA into a highly condensed, stable and inactive complex. This Cavia porcellus (Guinea pig) protein is Sperm protamine P1 (PRM1).